Here is a 214-residue protein sequence, read N- to C-terminus: Holliday junction branch migration complex subunit RuvA (214 aa).

Residues 1–68 are domain I; sequence MIGFLQGKVL…QPKPVLIGFD (68 aa). The segment at 69-146 is domain II; sequence SAEEKDFFQL…RFLLAADEAG (78 aa). The flexible linker stretch occupies residues 147-160; sequence AGDGVSKTGTPSLP. A domain III region spans residues 161 to 214; that stretch reads IQKAIDQVVDVLVQQLGHTPSAAKMMVAQALDRDPEIMTPEALFDEVYKGDVDA.

The protein belongs to the RuvA family. In terms of assembly, homotetramer. Forms an RuvA(8)-RuvB(12)-Holliday junction (HJ) complex. HJ DNA is sandwiched between 2 RuvA tetramers; dsDNA enters through RuvA and exits via RuvB. An RuvB hexamer assembles on each DNA strand where it exits the tetramer. Each RuvB hexamer is contacted by two RuvA subunits (via domain III) on 2 adjacent RuvB subunits; this complex drives branch migration. In the full resolvosome a probable DNA-RuvA(4)-RuvB(12)-RuvC(2) complex forms which resolves the HJ.

It is found in the cytoplasm. The RuvA-RuvB-RuvC complex processes Holliday junction (HJ) DNA during genetic recombination and DNA repair, while the RuvA-RuvB complex plays an important role in the rescue of blocked DNA replication forks via replication fork reversal (RFR). RuvA specifically binds to HJ cruciform DNA, conferring on it an open structure. The RuvB hexamer acts as an ATP-dependent pump, pulling dsDNA into and through the RuvAB complex. HJ branch migration allows RuvC to scan DNA until it finds its consensus sequence, where it cleaves and resolves the cruciform DNA. The chain is Holliday junction branch migration complex subunit RuvA from Desulforapulum autotrophicum (strain ATCC 43914 / DSM 3382 / VKM B-1955 / HRM2) (Desulfobacterium autotrophicum).